Here is a 179-residue protein sequence, read N- to C-terminus: Large ribosomal subunit protein uL5 (179 aa).

The protein belongs to the universal ribosomal protein uL5 family. As to quaternary structure, part of the 50S ribosomal subunit; part of the 5S rRNA/L5/L18/L25 subcomplex. Contacts the 5S rRNA and the P site tRNA. Forms a bridge to the 30S subunit in the 70S ribosome.

This is one of the proteins that bind and probably mediate the attachment of the 5S RNA into the large ribosomal subunit, where it forms part of the central protuberance. In the 70S ribosome it contacts protein S13 of the 30S subunit (bridge B1b), connecting the 2 subunits; this bridge is implicated in subunit movement. Contacts the P site tRNA; the 5S rRNA and some of its associated proteins might help stabilize positioning of ribosome-bound tRNAs. This Buchnera aphidicola subsp. Acyrthosiphon pisum (strain APS) (Acyrthosiphon pisum symbiotic bacterium) protein is Large ribosomal subunit protein uL5.